Consider the following 494-residue polypeptide: Vacuolar-processing enzyme (494 aa).

Positions 1-20 (MTRLASGVLITLLVALAGIA) are cleaved as a signal peptide. N-linked (GlcNAc...) asparagine glycosylation occurs at Asn-151. The active site involves His-178. Cys-220 serves as the catalytic Nucleophile. Residues Cys-253 and Cys-267 are joined by a disulfide bond. Asn-336 carries N-linked (GlcNAc...) asparagine glycosylation. 2 disulfide bridges follow: Cys-430/Cys-460 and Cys-442/Cys-477.

Belongs to the peptidase C13 family. In terms of tissue distribution, high levels are seen in the flowers, a lower level expression is seen in the leaves, while very low levels are seen in the stems and roots.

Asparagine-specific endopeptidase that may be involved in processing of proteins targeted to vacuoles that accumulate during ethylene-regulated processes such as flower opening and flavedo degreening. The sequence is that of Vacuolar-processing enzyme from Citrus sinensis (Sweet orange).